A 185-amino-acid polypeptide reads, in one-letter code: Transmembrane protein 252 (185 aa).

2 helical membrane passes run 8-28 (VLCA…GFFI) and 39-59 (LVVA…GIFW). A disordered region spans residues 125–149 (YTETSLEPQDKDKNDPQPEAPPPYP).

The protein localises to the membrane. This Rattus norvegicus (Rat) protein is Transmembrane protein 252 (Tmem252).